Here is a 178-residue protein sequence, read N- to C-terminus: Large ribosomal subunit protein uL6 (178 aa).

The protein belongs to the universal ribosomal protein uL6 family. As to quaternary structure, part of the 50S ribosomal subunit.

In terms of biological role, this protein binds to the 23S rRNA, and is important in its secondary structure. It is located near the subunit interface in the base of the L7/L12 stalk, and near the tRNA binding site of the peptidyltransferase center. This chain is Large ribosomal subunit protein uL6, found in Coxiella burnetii (strain CbuG_Q212) (Coxiella burnetii (strain Q212)).